Consider the following 529-residue polypeptide: Listeriolysin O (529 aa).

Positions 1–24 are cleaved as a signal peptide; the sequence is MKKIMLVFITLILVSLPIAQQTEA. 4 consecutive transmembrane segments (beta stranded) span residues 214–227, 234–243, 312–321, and 329–341; these read ESQL…AFKA, VNFGAISEGK, STKVKAAFDA, and SGDV…IKNS. Residues 483–493 carry the Conserved undecapeptide motif; that stretch reads ECTGLAWEWWR. The Cholesterol binding motif lies at 515–516; sequence TL.

This sequence belongs to the cholesterol-dependent cytolysin family. Homooligomeric pore complex of 35 to 50 subunits; when inserted in the host membrane.

The protein resides in the secreted. The protein localises to the host membrane. It localises to the host cell membrane. Its activity is regulated as follows. Activity of listeriolysin O is regulated on multiple levels. It should be high in the phagosome, thereby allowing escape of the bacteria from the phagosomal compartment. Then, once inside the host cytosol, the activity must be controlled to prevent lysis of the host plasma membrane and loss of the intracellular environment. Functionally, a cholesterol-dependent toxin that causes cytolysis by forming pores in cholesterol containing host membranes. After binding to target membranes, the protein undergoes a major conformation change, leading to its insertion in the host membrane and formation of an oligomeric pore complex. Cholesterol is required for binding to host membranes, membrane insertion and pore formation; cholesterol binding is mediated by a Thr-Leu pair in the C-terminus. Acts as a major virulence factor required for the escape of bacteria from phagosomal vacuoles and entry into the host cytosol. Can be reversibly inactivated by oxidation. The chain is Listeriolysin O (hly) from Listeria monocytogenes serotype 4b (strain F2365).